The following is a 121-amino-acid chain: Large ribosomal subunit protein bL19 (121 aa).

It belongs to the bacterial ribosomal protein bL19 family.

In terms of biological role, this protein is located at the 30S-50S ribosomal subunit interface and may play a role in the structure and function of the aminoacyl-tRNA binding site. The sequence is that of Large ribosomal subunit protein bL19 (rplS) from Borreliella burgdorferi (strain ATCC 35210 / DSM 4680 / CIP 102532 / B31) (Borrelia burgdorferi).